Reading from the N-terminus, the 178-residue chain is Large ribosomal subunit protein uL5 (178 aa).

Belongs to the universal ribosomal protein uL5 family. As to quaternary structure, part of the 50S ribosomal subunit; part of the 5S rRNA/L5/L18/L25 subcomplex. Contacts the 5S rRNA and the P site tRNA. Forms a bridge to the 30S subunit in the 70S ribosome.

This is one of the proteins that bind and probably mediate the attachment of the 5S RNA into the large ribosomal subunit, where it forms part of the central protuberance. In the 70S ribosome it contacts protein S13 of the 30S subunit (bridge B1b), connecting the 2 subunits; this bridge is implicated in subunit movement. Contacts the P site tRNA; the 5S rRNA and some of its associated proteins might help stabilize positioning of ribosome-bound tRNAs. This is Large ribosomal subunit protein uL5 from Psychrobacter sp. (strain PRwf-1).